The chain runs to 78 residues: Putative membrane protein insertion efficiency factor (78 aa).

This sequence belongs to the UPF0161 family.

The protein resides in the cell inner membrane. Its function is as follows. Could be involved in insertion of integral membrane proteins into the membrane. This is Putative membrane protein insertion efficiency factor from Prochlorococcus marinus subsp. pastoris (strain CCMP1986 / NIES-2087 / MED4).